A 306-amino-acid polypeptide reads, in one-letter code: Putative NylC-analogous protein (306 aa).

This sequence belongs to the peptidase S58 family.

The protein is Putative NylC-analogous protein of Agromyces sp. (strain KY5R).